Here is a 690-residue protein sequence, read N- to C-terminus: Quinohemoprotein alcohol dehydrogenase ADH IIB (690 aa).

The N-terminal stretch at Met-1 to Ala-22 is a signal peptide. Glu-81 lines the pyrroloquinoline quinone pocket. Cys-127 and Cys-128 are joined by a disulfide. Pyrroloquinoline quinone-binding positions include Arg-133, Thr-177, and Gly-193–Ala-194. Glu-195 serves as a coordination point for Ca(2+). Pyrroloquinoline quinone is bound at residue Thr-252. Ca(2+) contacts are provided by Asn-272 and Asp-317. The active-site Proton acceptor is the Asp-317. Residues Lys-344, Asn-404 to Trp-405, and Val-547 each bind pyrroloquinoline quinone. The Cytochrome c domain maps to Glu-600–Glu-678. Residues Cys-613, Cys-616, His-617, and Met-655 each coordinate heme c.

It belongs to the bacterial PQQ dehydrogenase family. As to quaternary structure, monomer. Pyrroloquinoline quinone is required as a cofactor. The cofactor is Ca(2+). Heme c serves as cofactor.

It is found in the periplasm. The catalysed reaction is 2 oxidized [azurin] + a primary alcohol = 2 reduced [azurin] + an aldehyde + 2 H(+). With respect to regulation, inhibited by 10 mM 1-butanol. In terms of biological role, catalyzes the dye-linked oxidation of primary alcohols to the corresponding aldehydes and the (subsequent) oxidation of the aldehydes to carboxylic acids. Exhibits activity with longer mono-alcohols (C-4 to C-7) but not with methanol or glycerol. Reacts with 1,2-propanediol and 1,3-propanediol but not with sugar alcohols such as D-sorbitol. The protein is Quinohemoprotein alcohol dehydrogenase ADH IIB of Pseudomonas putida (Arthrobacter siderocapsulatus).